A 168-amino-acid polypeptide reads, in one-letter code: 6,7-dimethyl-8-ribityllumazine synthase (168 aa).

Residues F24, 58–60, and 82–84 each bind 5-amino-6-(D-ribitylamino)uracil; these read ALE and AVI. 87–88 provides a ligand contact to (2S)-2-hydroxy-3-oxobutyl phosphate; that stretch reads ET. H90 serves as the catalytic Proton donor. A 5-amino-6-(D-ribitylamino)uracil-binding site is contributed by N115. R129 contacts (2S)-2-hydroxy-3-oxobutyl phosphate.

The protein belongs to the DMRL synthase family.

It catalyses the reaction (2S)-2-hydroxy-3-oxobutyl phosphate + 5-amino-6-(D-ribitylamino)uracil = 6,7-dimethyl-8-(1-D-ribityl)lumazine + phosphate + 2 H2O + H(+). Its pathway is cofactor biosynthesis; riboflavin biosynthesis; riboflavin from 2-hydroxy-3-oxobutyl phosphate and 5-amino-6-(D-ribitylamino)uracil: step 1/2. In terms of biological role, catalyzes the formation of 6,7-dimethyl-8-ribityllumazine by condensation of 5-amino-6-(D-ribitylamino)uracil with 3,4-dihydroxy-2-butanone 4-phosphate. This is the penultimate step in the biosynthesis of riboflavin. The polypeptide is 6,7-dimethyl-8-ribityllumazine synthase (Paraburkholderia xenovorans (strain LB400)).